The sequence spans 330 residues: Polygalacturonase inhibitor 1 (330 aa).

The signal sequence occupies residues 1-21 (MDKTATLCLLFLFTFLTTCLS). 2 disulfides stabilise this stretch: cysteine 25/cysteine 55 and cysteine 56/cysteine 63. 10 LRR repeats span residues 69 to 93 (NHRVTALTIFSGQISGQIPAEVGDL), 94 to 117 (PYLETLVFRKLSNLTGTIQPTIAK), 118 to 142 (LKNLRMLRLSWTNLTGPIPDFISQL), 143 to 166 (KNLEFLELSFNDLSGSIPSSLSTL), 167 to 189 (PKILALELSRNKLTGSIPESFGS), 191 to 215 (PGTVPDLRLSHNQLSGPIPKSLGNI), 217 to 237 (FNRIDLSRNKLQGDASMLFGS), 238 to 260 (NKTTWSIDLSRNMFQFDISKVDI), 261 to 285 (PKTLGILDLNHNGITGNIPVQWTEA), and 287 to 309 (LQFFNVSYNKLCGHIPTGGKLQT). Asparagine 106 and asparagine 130 each carry an N-linked (GlcNAc...) asparagine glycan. Asparagine 238 is a glycosylation site (N-linked (GlcNAc...) asparagine). N-linked (GlcNAc...) asparagine glycosylation occurs at asparagine 291. 2 disulfides stabilise this stretch: cysteine 298–cysteine 320 and cysteine 322–cysteine 329.

The protein belongs to the polygalacturonase-inhibiting protein family.

The protein localises to the secreted. It localises to the cell wall. The protein resides in the membrane. Inhibitor of fungal polygalacturonase. It is an important factor for plant resistance to phytopathogenic fungi. The sequence is that of Polygalacturonase inhibitor 1 (PGIP1) from Arabidopsis thaliana (Mouse-ear cress).